The primary structure comprises 434 residues: Nucleobase transporter PlUacP (434 aa).

Transmembrane regions (helical) follow at residues 9–29 (LGFQ…LIVG), 39–59 (LAYL…LQVW), 63–83 (FFGI…GPMI), 93–113 (AIYG…GFFG), 118–138 (FFPP…LIPV), 159–179 (ALSF…TGFI), 181–201 (AISI…MGKV), 218–238 (FYFG…LVAI), 306–326 (VVIT…IAAL), 327–347 (TLLI…GMVV), 365–385 (LLII…PNLF), and 394–414 (ILTS…NFLF).

The protein belongs to the nucleobase:cation symporter-2 (NCS2) (TC 2.A.40) family.

The protein resides in the cell membrane. With respect to regulation, inhibited by the proton gradient disruptor carbonyl cyanide m-chlorophenylhydrazone (CCCP), but not by the sodium gradient disruptor ouabain. Hypoxanthine, xanthine, cytosine and uric acid act as competitive inhibitors. Functionally, uptake of the purines adenine and guanine, and the pyrimidine uracil. Transport is probably proton-dependent. This is Nucleobase transporter PlUacP from Paenibacillus larvae subsp. larvae (strain NRRL B-3650 / LMG 16245).